The chain runs to 127 residues: MSYRKLGRTSSQRKAMLRDITTDLIINERIVTTEARAKEVRSTVEKMITLGKRGDLHARRQAATFVRNEVASVREEDESIVVESALQKLFNDLGPRFAERQGGYTRILKTEPRRGDAAPMVVIEFVK.

This sequence belongs to the bacterial ribosomal protein bL17 family. Part of the 50S ribosomal subunit. Contacts protein L32.

The protein is Large ribosomal subunit protein bL17 of Enterococcus faecalis (strain ATCC 700802 / V583).